We begin with the raw amino-acid sequence, 497 residues long: Cytochrome P450 76AD1 (497 aa).

Residues 4 to 24 (ATLAMILAIWFISFHFIKLLF) traverse the membrane as a helical segment. Heme is bound at residue C439.

This sequence belongs to the cytochrome P450 family. The cofactor is heme.

The protein localises to the membrane. It functions in the pathway pigment biosynthesis; betalain biosynthesis. In terms of biological role, converts L-DOPA to cyclo-DOPA in the betalain pathway. Provides the cyclo-DOPA moiety of all red betacyanins. The chain is Cytochrome P450 76AD1 from Beta vulgaris (Sugar beet).